A 409-amino-acid chain; its full sequence is Rho-GTPase-activating protein BAG7 (409 aa).

The segment covering 1-26 (MFNMNLLSTPSSEEGSPQNRSSSMSS) has biased composition (polar residues). Positions 1–32 (MFNMNLLSTPSSEEGSPQNRSSSMSSVEGKKD) are disordered. The 208-residue stretch at 50-257 (VSLEESLKVA…FLILHASDII (208 aa)) folds into the Rho-GAP domain. The tract at residues 362-409 (KLLGNVGNSSNTGIKDPTERVPRGEHKTKHKQRQSWLRRLTSPSRTQP) is disordered. Residues 377–386 (DPTERVPRGE) are compositionally biased toward basic and acidic residues.

In terms of assembly, interacts with RHO1.

Its function is as follows. Acts in signal transduction. Activates RHO1. The protein is Rho-GTPase-activating protein BAG7 (BAG7) of Saccharomyces cerevisiae (strain ATCC 204508 / S288c) (Baker's yeast).